The following is a 232-amino-acid chain: GTP cyclohydrolase III (232 aa).

It belongs to the archaeal-type GTP cyclohydrolase family.

It carries out the reaction GTP + 3 H2O = 2-amino-5-formylamino-6-(5-phospho-D-ribosylamino)pyrimidin-4(3H)-one + 2 phosphate + 2 H(+). Catalyzes the formation of 2-amino-5-formylamino-6-ribofuranosylamino-4(3H)-pyrimidinone ribonucleotide monophosphate and inorganic phosphate from GTP. Also has an independent pyrophosphate phosphohydrolase activity. This chain is GTP cyclohydrolase III, found in Saccharolobus islandicus (strain Y.G.57.14 / Yellowstone #1) (Sulfolobus islandicus).